A 300-amino-acid chain; its full sequence is GTPase Era (300 aa).

Residues 4 to 172 form the Era-type G domain; the sequence is KSGFVALAGK…LEKIKEELPE (169 aa). Residues 12–19 are G1; the sequence is GKPNVGKS. 12 to 19 contacts GTP; the sequence is GKPNVGKS. A G2 region spans residues 38–42; that stretch reads QTTRN. Residues 59–62 are G3; it reads DTPG. Residues 59–63 and 121–124 contribute to the GTP site; these read DTPGI and NKID. A G4 region spans residues 121 to 124; that stretch reads NKID. The tract at residues 151 to 153 is G5; that stretch reads ISA. The KH type-2 domain maps to 195–280; the sequence is IREKIFHLTR…YLDLNVKVKE (86 aa).

It belongs to the TRAFAC class TrmE-Era-EngA-EngB-Septin-like GTPase superfamily. Era GTPase family. As to quaternary structure, monomer.

It localises to the cytoplasm. Its subcellular location is the cell inner membrane. Its function is as follows. An essential GTPase that binds both GDP and GTP, with rapid nucleotide exchange. Plays a role in 16S rRNA processing and 30S ribosomal subunit biogenesis and possibly also in cell cycle regulation and energy metabolism. This is GTPase Era from Thermotoga petrophila (strain ATCC BAA-488 / DSM 13995 / JCM 10881 / RKU-1).